We begin with the raw amino-acid sequence, 349 residues long: tRNA pseudouridine synthase D (349 aa).

Phe26 contributes to the substrate binding site. Asp79 serves as the catalytic Nucleophile. Substrate is bound at residue Asn128. Residues 154-302 (GVPNYFGSQR…VEGSRRAVLL (149 aa)) form the TRUD domain. A substrate-binding site is contributed by Phe328.

The protein belongs to the pseudouridine synthase TruD family.

It catalyses the reaction uridine(13) in tRNA = pseudouridine(13) in tRNA. Its function is as follows. Responsible for synthesis of pseudouridine from uracil-13 in transfer RNAs. The protein is tRNA pseudouridine synthase D of Yersinia pestis bv. Antiqua (strain Antiqua).